A 229-amino-acid polypeptide reads, in one-letter code: Ras-related protein rab-39 (229 aa).

73–77 is a binding site for GTP; sequence DTAGQ. S-geranylgeranyl cysteine attachment occurs at residues Cys227 and Cys229. Cys229 carries the cysteine methyl ester modification.

The protein belongs to the small GTPase superfamily. Rab family. As to quaternary structure, interacts (in GTP-bound form) with Ras association domain-containing protein rsf-1.

Its subcellular location is the cell membrane. It is found in the cytoplasmic vesicle membrane. It localises to the golgi apparatus. In terms of biological role, small GTPases Rab involved in autophagy. The small GTPases Rab are key regulators of intracellular membrane trafficking, from the formation of transport vesicles to their fusion with membranes. Rabs cycle between an inactive GDP-bound form and an active GTP-bound form that is able to recruit to membranes different sets of downstream effectors directly responsible for vesicle formation, movement, tethering and fusion. Involved in positively regulating the oxidative stress response, perhaps in concert with the Ras association domain-containing protein rsf-1. The sequence is that of Ras-related protein rab-39 from Caenorhabditis elegans.